A 243-amino-acid polypeptide reads, in one-letter code: Protein YagJ (243 aa).

This is Protein YagJ (yagJ) from Escherichia coli (strain K12).